Consider the following 177-residue polypeptide: MMVWNWIDRTPRRVLALISLACVALLACGLYLQHVVGLVPCPMCIVQRYALIGLALLTGLASARSAKGWWLTLSALAALTAGFGATVAARQSWLQWYPPQSVSCGRDFYGMIESFPLSRAIPMILRGSGDCAAVDWSLLGGSIANWSFLCFALLGLLLLALLARGVRGARQRAPAPV.

Residues 1–14 (MMVWNWIDRTPRRV) are Cytoplasmic-facing. Residues 15–31 (LALISLACVALLACGLY) traverse the membrane as a helical segment. Over 32–49 (LQHVVGLVPCPMCIVQRY) the chain is Periplasmic. Cysteines 41 and 44 form a disulfide. The helical transmembrane segment at 50-64 (ALIGLALLTGLASAR) threads the bilayer. At 65-70 (SAKGWW) the chain is on the cytoplasmic side. A helical transmembrane segment spans residues 71–89 (LTLSALAALTAGFGATVAA). Residues 90 to 145 (RQSWLQWYPPQSVSCGRDFYGMIESFPLSRAIPMILRGSGDCAAVDWSLLGGSIAN) are Periplasmic-facing. A disulfide bond links cysteine 104 and cysteine 131. The helical transmembrane segment at 146 to 164 (WSFLCFALLGLLLLALLAR) threads the bilayer. Residues 165–177 (GVRGARQRAPAPV) are Cytoplasmic-facing.

It belongs to the DsbB family.

The protein localises to the cell inner membrane. Its function is as follows. Required for disulfide bond formation in some periplasmic proteins. Acts by oxidizing the DsbA protein. The polypeptide is Disulfide bond formation protein B (Verminephrobacter eiseniae (strain EF01-2)).